The sequence spans 448 residues: UDP-N-acetylmuramoylalanine--D-glutamate ligase (448 aa).

112–118 (GSNAKST) is an ATP binding site.

This sequence belongs to the MurCDEF family.

It localises to the cytoplasm. It carries out the reaction UDP-N-acetyl-alpha-D-muramoyl-L-alanine + D-glutamate + ATP = UDP-N-acetyl-alpha-D-muramoyl-L-alanyl-D-glutamate + ADP + phosphate + H(+). The protein operates within cell wall biogenesis; peptidoglycan biosynthesis. Its function is as follows. Cell wall formation. Catalyzes the addition of glutamate to the nucleotide precursor UDP-N-acetylmuramoyl-L-alanine (UMA). This Acinetobacter baumannii (strain ATCC 17978 / DSM 105126 / CIP 53.77 / LMG 1025 / NCDC KC755 / 5377) protein is UDP-N-acetylmuramoylalanine--D-glutamate ligase.